Consider the following 357-residue polypeptide: MSDKTPRKPTAFRLEQPARVSAASEQEEPRHPRAVKDLEQITPQADVFDLTDDEAAELEILDPAFEAPERKGWSLSRILFGALGILVSFAIGIWTEDLIRALFARADWLGWTALGVAMVALAAFAAIILRELVALRRLASVQHLRKDAADAAERDDMAAARKAVDALRTIAAGIPETAKGRQLLDSLTDDIIDGRDLIRLAETEILRPLDREARTLVLNASKRVSIVTAISTRALVDIGYVIFESARLIRRLSQLYGGRPGTLGFIKLARRVIAHLAVTGTIAMGDSVIQQLVGHGLASRLSAKLGEGVVNGLMTARIGIAAMDVVRPFPFNAEKRPGIGDFIGELARLNSDRNARK.

The interval 1–36 (MSDKTPRKPTAFRLEQPARVSAASEQEEPRHPRAVK) is disordered. Residues 27–36 (EEPRHPRAVK) are compositionally biased toward basic and acidic residues. Helical transmembrane passes span 78-98 (ILFGALGILVSFAIGIWTEDL) and 109-129 (LGWTALGVAMVALAAFAAIIL).

It belongs to the UPF0283 family.

Its subcellular location is the cell inner membrane. In Brucella suis (strain ATCC 23445 / NCTC 10510), this protein is UPF0283 membrane protein BSUIS_A1077.